The chain runs to 637 residues: 1-deoxy-D-xylulose-5-phosphate synthase (637 aa).

Residues histidine 73 and 113 to 115 each bind thiamine diphosphate; that span reads SHA. Residue aspartate 145 participates in Mg(2+) binding. Residues 146-147, asparagine 175, tyrosine 286, and glutamate 367 each bind thiamine diphosphate; that span reads GA. Asparagine 175 contacts Mg(2+).

This sequence belongs to the transketolase family. DXPS subfamily. Homodimer. It depends on Mg(2+) as a cofactor. Thiamine diphosphate is required as a cofactor.

It catalyses the reaction D-glyceraldehyde 3-phosphate + pyruvate + H(+) = 1-deoxy-D-xylulose 5-phosphate + CO2. It participates in metabolic intermediate biosynthesis; 1-deoxy-D-xylulose 5-phosphate biosynthesis; 1-deoxy-D-xylulose 5-phosphate from D-glyceraldehyde 3-phosphate and pyruvate: step 1/1. Its function is as follows. Catalyzes the acyloin condensation reaction between C atoms 2 and 3 of pyruvate and glyceraldehyde 3-phosphate to yield 1-deoxy-D-xylulose-5-phosphate (DXP). The chain is 1-deoxy-D-xylulose-5-phosphate synthase from Thermobifida fusca (strain YX).